The primary structure comprises 461 residues: Putative ankyrin repeat protein FPV218 (461 aa).

ANK repeat units lie at residues 1–28 (MLSLYYAINYKNRKMVERLLREGVHPDS), 31–61 (KGFYRPLVKSILLRDVDLVSILLQNGANPNN), 65–94 (ETVSPLAIAIKVNSPTIVSLLLDYNADTSL), 96–116 (PLYVSFPIIKVLVYHGIDVNV), 120–149 (ESRSFLHYAAKNDDVDTVISLILHGANVNV), 153–182 (KGLSPLHHAVSKKTTLTAKILLENGARVNI), 186–213 (LGRLPLHLGANTYEMVKLLIDYGSPIDI), 217–248 (NGSTPLHYAIWKSSLDTIRLLVNVSTINALDN), 250–277 (CNSPLHYIILSETEILVELLLRGADITI), 281–312 (CGNTPLDILCKLRIKKLDNIKAIISNAFLMRE), 358–385 (NGPTILDVCTDKVHFLHRLVNARDNVQY), and 431–460 (LPYELKHYIIEYINIEFIKSLLEHTNLKNK).

The polypeptide is Putative ankyrin repeat protein FPV218 (Fowlpox virus (strain NVSL) (FPV)).